A 432-amino-acid polypeptide reads, in one-letter code: Transcriptional adapter 3 (432 aa).

Lys-21 participates in a covalent cross-link: Glycyl lysine isopeptide (Lys-Gly) (interchain with G-Cter in SUMO2). Positions 40–69 (IEELDTLQLELETLLSSASRRLRVLEAETQ) form a coiled coil. The tract at residues 87–127 (GRDHELGAPPKHGKPKKQKLEGKTGHGPGPGPGRPKSKNVQ) is disordered. Lys-129 is covalently cross-linked (Glycyl lysine isopeptide (Lys-Gly) (interchain with G-Cter in SUMO2)). Positions 272 to 319 (NIISPMEDSPIPDMSGKESGADGASTSPRNQNKPFSVPHTKSLESRIK) are disordered. 2 positions are modified to phosphoserine: Ser-280 and Ser-298. Residues 295-305 (ASTSPRNQNKP) show a composition bias toward polar residues. The stretch at 367–407 (LLRLAKEEVSRQELRQRVRMADNEVMDAFRKIMAARQKKRT) forms a coiled coil. An N6-acetyllysine modification is found at Lys-418.

The protein belongs to the NGG1 family. The PCAF complex is composed of a number of TBP-associated factors (TAFS), such as TAF5, TAF5L, TAF6, TAF6L, TAF9, TAF10 and TAF12, PCAF, and also PCAF-associated factors (PAFs), such as TADA2L/ADA2, TADA3L/ADA3 and SPT3. Interacts directly with TADA2L and PCAF and also with the high-risk HPV oncoprotein E6. Component of the STAGA transcription coactivator-HAT complex, at least composed of SUPT3H, GCN5L2, TAF5L, TAF6L, SUPT7L, TADA3L, TAD1L, TAF10, TAF12, TRRAP and TAF9. Component of the TFTC-HAT complex. Component of the ADA2A-containing complex (ATAC), composed of KAT14, KAT2A, TADA2L, TADA3L, ZZ3, MBIP, WDR5, YEATS2, CCDC101 and DR1.

It localises to the nucleus. Its function is as follows. Functions as a component of the PCAF complex. The PCAF complex is capable of efficiently acetylating histones in a nucleosomal context. The PCAF complex could be considered as the human version of the yeast SAGA complex. Also known as a coactivator for p53/TP53-dependent transcriptional activation. Component of the ATAC complex, a complex with histone acetyltransferase activity on histones H3 and H4. This Mus musculus (Mouse) protein is Transcriptional adapter 3 (Tada3).